Here is a 171-residue protein sequence, read N- to C-terminus: MDLKDKLRHVMDFPKEGIDFIDITTVLQDPEAFRECMESFKTLAEKMGDFDLIVGSESRGFIFGAPLAYRMEKGFVPVRKKGKLPYKTVREEYDLEYGKDELEIHSDAIAPGEKVLIVDDLLATGGTTEANIKLVEKLGGEVTGIVYFIELMSLKGRDKLKGYNVDSIVKF.

The protein belongs to the purine/pyrimidine phosphoribosyltransferase family. Homodimer.

Its subcellular location is the cytoplasm. It carries out the reaction AMP + diphosphate = 5-phospho-alpha-D-ribose 1-diphosphate + adenine. It functions in the pathway purine metabolism; AMP biosynthesis via salvage pathway; AMP from adenine: step 1/1. In terms of biological role, catalyzes a salvage reaction resulting in the formation of AMP, that is energically less costly than de novo synthesis. The polypeptide is Adenine phosphoribosyltransferase (Ruminiclostridium cellulolyticum (strain ATCC 35319 / DSM 5812 / JCM 6584 / H10) (Clostridium cellulolyticum)).